We begin with the raw amino-acid sequence, 285 residues long: Probable endonuclease 4 (285 aa).

Residues H69, H109, E145, D179, H182, H216, D229, H231, and E261 each coordinate Zn(2+).

Belongs to the AP endonuclease 2 family. Requires Zn(2+) as cofactor.

It catalyses the reaction Endonucleolytic cleavage to 5'-phosphooligonucleotide end-products.. Functionally, endonuclease IV plays a role in DNA repair. It cleaves phosphodiester bonds at apurinic or apyrimidinic (AP) sites, generating a 3'-hydroxyl group and a 5'-terminal sugar phosphate. This chain is Probable endonuclease 4, found in Salmonella dublin (strain CT_02021853).